A 211-amino-acid polypeptide reads, in one-letter code: Small ribosomal subunit protein eS1 (211 aa).

Belongs to the eukaryotic ribosomal protein eS1 family.

The protein is Small ribosomal subunit protein eS1 of Archaeoglobus fulgidus (strain ATCC 49558 / DSM 4304 / JCM 9628 / NBRC 100126 / VC-16).